The following is a 286-amino-acid chain: Phycobilisome 32.1 kDa linker polypeptide, phycocyanin-associated, rod (286 aa).

Residues Ala2 to Arg180 enclose the PBS-linker domain. Residues Asp234–Ala286 form the CpcD-like domain.

Belongs to the phycobilisome linker protein family. In terms of assembly, associated with the phycobilisome, a hemidiscoidal structure that is composed of two distinct substructures: a core complex and a number of rods radiating from the core.

The protein resides in the cellular thylakoid membrane. Its function is as follows. Rod linker protein, associated with phycocyanin. Linker polypeptides determine the state of aggregation and the location of the disk-shaped phycobiliprotein units within the phycobilisome and modulate their spectroscopic properties in order to mediate a directed and optimal energy transfer. The sequence is that of Phycobilisome 32.1 kDa linker polypeptide, phycocyanin-associated, rod (cpcC) from Nostoc sp. (strain PCC 7120 / SAG 25.82 / UTEX 2576).